A 287-amino-acid polypeptide reads, in one-letter code: Acetyl-coenzyme A carboxylase carboxyl transferase subunit beta (287 aa).

Positions 25-287 (VWTKCSACEQ…KMLNTHVIEE (263 aa)) constitute a CoA carboxyltransferase N-terminal domain. 4 residues coordinate Zn(2+): cysteine 29, cysteine 32, cysteine 48, and cysteine 51. The C4-type zinc-finger motif lies at 29-51 (CSACEQVLYRAELERNLEVCPKC).

Belongs to the AccD/PCCB family. As to quaternary structure, acetyl-CoA carboxylase is a heterohexamer composed of biotin carboxyl carrier protein (AccB), biotin carboxylase (AccC) and two subunits each of ACCase subunit alpha (AccA) and ACCase subunit beta (AccD). It depends on Zn(2+) as a cofactor.

It localises to the cytoplasm. The catalysed reaction is N(6)-carboxybiotinyl-L-lysyl-[protein] + acetyl-CoA = N(6)-biotinyl-L-lysyl-[protein] + malonyl-CoA. Its pathway is lipid metabolism; malonyl-CoA biosynthesis; malonyl-CoA from acetyl-CoA: step 1/1. In terms of biological role, component of the acetyl coenzyme A carboxylase (ACC) complex. Biotin carboxylase (BC) catalyzes the carboxylation of biotin on its carrier protein (BCCP) and then the CO(2) group is transferred by the transcarboxylase to acetyl-CoA to form malonyl-CoA. The chain is Acetyl-coenzyme A carboxylase carboxyl transferase subunit beta from Aeromonas salmonicida (strain A449).